A 684-amino-acid chain; its full sequence is Ubinuclein-1 (684 aa).

Disordered stretches follow at residues 108–137, 157–287, 311–332, 609–631, and 660–684; these read YKGN…FIDD, YVNR…LGKS, NVTG…VKSK, MVDR…CNPT, and PQTR…NLPS. Acidic residues predominate over residues 114–137; that stretch reads SDGEELDGAPDDDEYDTEDSFIDD. 2 stretches are compositionally biased toward basic and acidic residues: residues 157 to 167 and 184 to 199; these read YVNRGKLERME and SAKP…DKHT. Residues 211-235 show a composition bias toward polar residues; sequence STAPGSWKTQESPLPSGAQDANTSV. Residues 238–260 show a composition bias toward basic and acidic residues; the sequence is DDVKHSDRANHQSRNDTSHKSRE. Polar residues-rich tracts occupy residues 261 to 284, 311 to 321, 611 to 631, and 669 to 684; these read TGSS…TSLL, NVTGSRQSSQA, DRSN…CNPT, and QNLN…NLPS.

This sequence belongs to the ubinuclein family. As to quaternary structure, component of the HIRA complex made of UBN1, UBN2, ASF1A, CABIN1 and HIRA. Interacts with HIRA.

Its subcellular location is the nucleus. The protein resides in the nucleolus. May be required for replication-independent chromatin assembly. This is Ubinuclein-1 from Arabidopsis thaliana (Mouse-ear cress).